The following is a 125-amino-acid chain: uncharacterized protein (125 aa).

Residues 100–120 form a helical membrane-spanning segment; it reads YFKVAFALAVLTPLAIWIFYI.

It is found in the membrane. This is an uncharacterized protein from Saccharomyces cerevisiae (strain ATCC 204508 / S288c) (Baker's yeast).